The following is a 450-amino-acid chain: Glucose-6-phosphate isomerase (450 aa).

The active-site Proton donor is the glutamate 290. Catalysis depends on residues histidine 311 and lysine 425.

Belongs to the GPI family.

Its subcellular location is the cytoplasm. It carries out the reaction alpha-D-glucose 6-phosphate = beta-D-fructose 6-phosphate. It functions in the pathway carbohydrate biosynthesis; gluconeogenesis. It participates in carbohydrate degradation; glycolysis; D-glyceraldehyde 3-phosphate and glycerone phosphate from D-glucose: step 2/4. In terms of biological role, catalyzes the reversible isomerization of glucose-6-phosphate to fructose-6-phosphate. In Limosilactobacillus fermentum (Lactobacillus fermentum), this protein is Glucose-6-phosphate isomerase.